A 551-amino-acid polypeptide reads, in one-letter code: Cation/acetate symporter ActP (551 aa).

The next 14 helical transmembrane spans lie at 5-25 (HWSALSLFVLPALAQAEALTG), 34-54 (IQAIVMFLLFVGGTLYITYWA), 77-97 (GLAIAGDYMSAASFLGISALV), 104-124 (GLIYSIGFLIGWPIILFLIAE), 150-170 (LSACGSLVVVALYLIAQMVGA), 184-204 (VAVVLVGILMVLYVLFGGMLA), 207-227 (WVQIIKAVMLLSGATFMAIMV), 263-283 (ISALSLGLALMFGTAGLPHIL), 304-324 (GFIGYFYILTFIIGFGAILLV), 356-376 (FFLGFISAVAFATILAVVAGL), 406-426 (VSKITVIILGIVAIGLGILFE), 430-450 (IAFMVGLAFSIAASCNFPIII), 469-489 (LGLSTAVILMILGPTIWVTIL), and 498-518 (YEYPALFSMIAAFVGTWFFSI).

Belongs to the sodium:solute symporter (SSF) (TC 2.A.21) family.

The protein resides in the cell inner membrane. In terms of biological role, transports acetate. The sequence is that of Cation/acetate symporter ActP from Yersinia pseudotuberculosis serotype IB (strain PB1/+).